The chain runs to 905 residues: Protein translocase subunit SecA (905 aa).

Residues Q86, 104-108, and D499 each bind ATP; that span reads GEGKT. Zn(2+)-binding residues include C890, C892, C901, and H902.

This sequence belongs to the SecA family. In terms of assembly, monomer and homodimer. Part of the essential Sec protein translocation apparatus which comprises SecA, SecYEG and auxiliary proteins SecDF-YajC and YidC. Zn(2+) serves as cofactor.

The protein resides in the cell inner membrane. It localises to the cytoplasm. It catalyses the reaction ATP + H2O + cellular proteinSide 1 = ADP + phosphate + cellular proteinSide 2.. Its function is as follows. Part of the Sec protein translocase complex. Interacts with the SecYEG preprotein conducting channel. Has a central role in coupling the hydrolysis of ATP to the transfer of proteins into and across the cell membrane, serving both as a receptor for the preprotein-SecB complex and as an ATP-driven molecular motor driving the stepwise translocation of polypeptide chains across the membrane. The chain is Protein translocase subunit SecA from Rickettsia typhi (strain ATCC VR-144 / Wilmington).